Reading from the N-terminus, the 2197-residue chain is uncharacterized protein (2197 aa).

Residue Ser-2 is modified to N-acetylserine. One copy of the HEAT repeat lies at 2159–2195 (TIPFLAELLEDVELSVKSLAQDIIKQMEEMSGESLAE).

Belongs to the HEATR1/UTP10 family.

It is found in the nucleus. Its subcellular location is the nucleolus. Its function is as follows. Involved in nucleolar processing of pre-18S ribosomal RNA. Involved in ribosome biosynthesis. This is an uncharacterized protein from Arabidopsis thaliana (Mouse-ear cress).